Consider the following 84-residue polypeptide: Small ribosomal subunit protein uS17 (84 aa).

This sequence belongs to the universal ribosomal protein uS17 family. Part of the 30S ribosomal subunit.

Its function is as follows. One of the primary rRNA binding proteins, it binds specifically to the 5'-end of 16S ribosomal RNA. This is Small ribosomal subunit protein uS17 from Enterobacter sp. (strain 638).